The sequence spans 219 residues: MAKGILGRKIGMTQVFDEKGSLIPITIVDVSDNVILQQNSVEKNGYLSTQLGFSSKREKLSTKPALGHFKNAKTSPKRFIKEIRFLPGIKNELSELDLGTSLKTNLFQPGDIVDVIGISKGKGFSGSIKRHNQSEGPKSHGSRYHRRPGSMGPIKGKIKGKKLPGQMGHQTVTLQNLKINSIDHEQELFLIKGSIPGPRKGFVMIKTAIKTVIKENQDA.

Residues Phe-124–Ile-154 form a disordered region.

This sequence belongs to the universal ribosomal protein uL3 family. In terms of assembly, part of the 50S ribosomal subunit. Forms a cluster with proteins L14 and L19.

Functionally, one of the primary rRNA binding proteins, it binds directly near the 3'-end of the 23S rRNA, where it nucleates assembly of the 50S subunit. The chain is Large ribosomal subunit protein uL3 from Phytoplasma mali (strain AT).